The following is a 235-amino-acid chain: 2-C-methyl-D-erythritol 4-phosphate cytidylyltransferase (235 aa).

It belongs to the IspD/TarI cytidylyltransferase family. IspD subfamily.

The catalysed reaction is 2-C-methyl-D-erythritol 4-phosphate + CTP + H(+) = 4-CDP-2-C-methyl-D-erythritol + diphosphate. The protein operates within isoprenoid biosynthesis; isopentenyl diphosphate biosynthesis via DXP pathway; isopentenyl diphosphate from 1-deoxy-D-xylulose 5-phosphate: step 2/6. Its function is as follows. Catalyzes the formation of 4-diphosphocytidyl-2-C-methyl-D-erythritol from CTP and 2-C-methyl-D-erythritol 4-phosphate (MEP). The sequence is that of 2-C-methyl-D-erythritol 4-phosphate cytidylyltransferase from Pseudomonas putida (strain ATCC 700007 / DSM 6899 / JCM 31910 / BCRC 17059 / LMG 24140 / F1).